Here is a 456-residue protein sequence, read N- to C-terminus: Chaperone protein dnaJ GFA2, mitochondrial (456 aa).

A mitochondrion-targeting transit peptide spans 1 to 89; the sequence is MVPSNGAKVL…RSFHGTGSSF (89 aa). The J domain occupies 94 to 159; sequence DYYSVLGVSK…EKRDLYDQVG (66 aa). The segment at 225 to 303 adopts a CR-type zinc-finger fold; sequence GCSKTVTFQT…CRGARVVRGQ (79 aa). Residues C238, C241, C255, C258, C277, C280, C291, and C294 each coordinate Zn(2+). 4 CXXCXGXG motif repeats span residues 238–245, 255–262, 277–284, and 291–298; these read CNTCGGQG, CKACNGSG, CQKCGGAG, and CKSCRGAR.

It belongs to the DnaJ family. Widely expressed.

The protein localises to the mitochondrion. In terms of biological role, chaperone that may play a role in mitochondrial protein folding. Involved in female gametophyte development. Required for cell death of the synergid cells during fertilization process, and fusion of the polar nuclei during megagametogenesis. The polypeptide is Chaperone protein dnaJ GFA2, mitochondrial (Arabidopsis thaliana (Mouse-ear cress)).